The chain runs to 181 residues: I-Kappa-B like protein C2 (181 aa).

ANK repeat units lie at residues 54-86, 91-121, and 125-154; these read DGKX…DINS, DGNT…DMEI, and ARKT…RCDV.

This sequence belongs to the polydnaviridae I-Kappa-B-like protein family.

Suppresses the host immune response through NF-kappa-B inactivation. Possesses ankyrin repeat domains required for NF-kappa-B binding but lacks the regulatory regions required for dissociation from NF-kappa-B and degradation. Therefore, prevents host NF-kappa-B release and subsequent activation. This Microplitis demolitor (Parasitoid wasp) protein is I-Kappa-B like protein C2 (C2).